We begin with the raw amino-acid sequence, 348 residues long: Ileal sodium/bile acid cotransporter (348 aa).

At 1 to 28 (MNDPNSCVDNATVCSGASCVVPESNFNN) the chain is on the extracellular side. A glycan (N-linked (GlcNAc...) asparagine) is linked at Asn10. A helical membrane pass occupies residues 29-49 (ILSVVLSTVLTILLALVMFSM). The Cytoplasmic portion of the chain corresponds to 50-82 (GCNVEIKKFLGHIKRPWGICVGFLCQFGIMPLT). Residues 83–103 (GFILSVAFDILPLQAVVVLII) traverse the membrane as a helical segment. Residues 104–126 (GCCPGGTASNILAYWVDGDMDLS) are Extracellular-facing. A helical membrane pass occupies residues 127–147 (VSMTTCSTLLALGMMPLCLLI). Topologically, residues 148–157 (YTKMWVDSGS) are cytoplasmic. Residues 158-178 (IVIPYDNIGTSLVSLVVPVSI) form a helical membrane-spanning segment. The Extracellular segment spans residues 179–195 (GMFVNHKWPQKAKIILK). Residues 196–216 (IGSIAGAILIVLIAVVGGILY) traverse the membrane as a helical segment. The Cytoplasmic portion of the chain corresponds to 217-224 (QSAWIIAP). The helical transmembrane segment at 225 to 245 (KLWIIGTIFPVAGYSLGFLLA) threads the bilayer. Over 246 to 284 (RIAGLPWYRCRTVAFETGMQNTQLCSTIVQLSFTPEELN) the chain is Extracellular. The chain crosses the membrane as a helical span at residues 285–305 (VVFTFPLIYSIFQLAFAAIFL). At 306–348 (GFYVAYKKCHGKNKAEIPESKENGTEPESSFYKANGGFQPDEK) the chain is on the cytoplasmic side. Basic and acidic residues predominate over residues 320 to 329 (AEIPESKENG). Residues 320–348 (AEIPESKENGTEPESSFYKANGGFQPDEK) are disordered. At Ser335 the chain carries Phosphoserine.

The protein belongs to the bile acid:sodium symporter (BASS) (TC 2.A.28) family. In terms of assembly, monomer and homodimer. In terms of tissue distribution, mainly expressed in ileum and kidney, lower expression in cecum.

The protein localises to the membrane. The catalysed reaction is taurocholate(out) + 2 Na(+)(out) = taurocholate(in) + 2 Na(+)(in). It catalyses the reaction cholate(out) + 2 Na(+)(out) = cholate(in) + 2 Na(+)(in). The enzyme catalyses taurochenodeoxycholate(out) + 2 Na(+)(out) = taurochenodeoxycholate(in) + 2 Na(+)(in). It carries out the reaction tauroursodeoxycholate(out) + 2 Na(+)(out) = tauroursodeoxycholate(in) + 2 Na(+)(in). The catalysed reaction is glycocholate(out) + 2 Na(+)(out) = glycocholate(in) + 2 Na(+)(in). It catalyses the reaction tauronorcholate(out) + 2 Na(+)(out) = tauronorcholate(in) + 2 Na(+)(in). The enzyme catalyses tauroallocholate(out) + 2 Na(+)(out) = tauroallocholate(in) + 2 Na(+)(in). It carries out the reaction taurodeoxycholate(out) + 2 Na(+)(out) = taurodeoxycholate(in) + 2 Na(+)(in). The catalysed reaction is tauro-beta-muricholate(out) + 2 Na(+)(out) = tauro-beta-muricholate(in) + 2 Na(+)(in). Its function is as follows. Plays a critical role in the sodium-dependent reabsorption of bile acids from the lumen of the small intestine. Transports various bile acids, unconjugated or conjugated, such as cholate and taurocholate. Also responsible for bile acid transport in the renal proximal tubules, a salvage mechanism that helps conserve bile acids. Works collaboratively with the Na(+)-taurocholate cotransporting polypeptide (NTCP), the organic solute transporter (OST), and the bile salt export pump (BSEP), to ensure efficacious biological recycling of bile acids during enterohepatic circulation. In Homo sapiens (Human), this protein is Ileal sodium/bile acid cotransporter (SLC10A2).